The primary structure comprises 173 residues: Translation initiation factor IF-3 (173 aa).

This sequence belongs to the IF-3 family. In terms of assembly, monomer.

It is found in the cytoplasm. In terms of biological role, IF-3 binds to the 30S ribosomal subunit and shifts the equilibrium between 70S ribosomes and their 50S and 30S subunits in favor of the free subunits, thus enhancing the availability of 30S subunits on which protein synthesis initiation begins. In Ehrlichia chaffeensis (strain ATCC CRL-10679 / Arkansas), this protein is Translation initiation factor IF-3.